We begin with the raw amino-acid sequence, 1303 residues long: Phosphoribosylformylglycinamidine synthase (1303 aa).

ATP is bound by residues 308–319 and Ala679; that span reads GASTGSGGEIRD. Residues Glu719, Asn723, and Asp892 each coordinate Mg(2+). A disordered region spans residues 1003 to 1023; that stretch reads LRDNPACADQEHEAKKDNSDP. Residues 1011–1021 are compositionally biased toward basic and acidic residues; the sequence is DQEHEAKKDNS. The 254-residue stretch at 1050 to 1303 folds into the Glutamine amidotransferase type-1 domain; that stretch reads MAILREQGVN…MFQNARKNIG (254 aa). The Nucleophile role is filled by Cys1143. Active-site residues include His1268 and Glu1270.

In the N-terminal section; belongs to the FGAMS family. As to quaternary structure, monomer.

Its subcellular location is the cytoplasm. The catalysed reaction is N(2)-formyl-N(1)-(5-phospho-beta-D-ribosyl)glycinamide + L-glutamine + ATP + H2O = 2-formamido-N(1)-(5-O-phospho-beta-D-ribosyl)acetamidine + L-glutamate + ADP + phosphate + H(+). It functions in the pathway purine metabolism; IMP biosynthesis via de novo pathway; 5-amino-1-(5-phospho-D-ribosyl)imidazole from N(2)-formyl-N(1)-(5-phospho-D-ribosyl)glycinamide: step 1/2. Its function is as follows. Phosphoribosylformylglycinamidine synthase involved in the purines biosynthetic pathway. Catalyzes the ATP-dependent conversion of formylglycinamide ribonucleotide (FGAR) and glutamine to yield formylglycinamidine ribonucleotide (FGAM) and glutamate. This is Phosphoribosylformylglycinamidine synthase from Aliivibrio fischeri (strain ATCC 700601 / ES114) (Vibrio fischeri).